Here is a 245-residue protein sequence, read N- to C-terminus: 8-amino-3,8-dideoxy-manno-octulosonate cytidylyltransferase (245 aa).

The protein belongs to the KdsB family.

The protein resides in the cytoplasm. It catalyses the reaction 8-amino-3,8-dideoxy-alpha-D-manno-octulosonate + CTP = CMP-8-amino-3,8-dideoxy-alpha-D-manno-oct-2-ulosonate + diphosphate. It functions in the pathway bacterial outer membrane biogenesis; lipopolysaccharide biosynthesis. In terms of biological role, activates KDO8N (a required 8-carbon sugar) for incorporation into bacterial lipopolysaccharide in the Shewanella genus. This is 8-amino-3,8-dideoxy-manno-octulosonate cytidylyltransferase from Shewanella putrefaciens (strain CN-32 / ATCC BAA-453).